The sequence spans 802 residues: Peptidyl serine alpha-galactosyltransferase (802 aa).

The first 19 residues, 1 to 19 (MRWDLITAIVAALVVSVLA), serve as a signal peptide directing secretion. The Extracellular segment spans residues 20–750 (DESGQMAPYR…SEGRFSTLKL (731 aa)). Asn-214, Asn-275, Asn-425, and Asn-637 each carry an N-linked (GlcNAc...) asparagine glycan. Residues 699–741 (RNCPEPGSESTEKISVSRKVGNIETKQTQGSDETKESSGSSES) form a disordered region. Residues 751–771 (WVIALWLISGVGFLVVMLLVF) form a helical membrane-spanning segment. The Cytoplasmic segment spans residues 772-802 (STRRGRGTTRGKGYRNKRRTSYSNTGFLDTK). The segment covering 777 to 791 (RGTTRGKGYRNKRRT) has biased composition (basic residues). The disordered stretch occupies residues 777-802 (RGTTRGKGYRNKRRTSYSNTGFLDTK). Positions 792–802 (SYSNTGFLDTK) are enriched in polar residues.

The protein localises to the endoplasmic reticulum membrane. Functionally, glycosyltransferase involved in the O-galactosylation of several proteins including extensins. Catalyzes the transfer of alpha-galactosyl to Ser residues. Hydroxylation of proline residues adjacent to the serine acceptor is required for activity. In Arabidopsis thaliana (Mouse-ear cress), this protein is Peptidyl serine alpha-galactosyltransferase.